The following is a 146-amino-acid chain: MKLHELQPAEGSRKVRNRVGRGIGSGNGKTAGKGHKGQKARSGGGVRPGFEGGQNPLYRRLPKRGFTNIHRKEYTVVNLDVLNRFEAGTEVTPELLIETKTVKNVKHGIKVLGNGNLDKNLTVKAHKFSASAVKAIEAAGGKTEVV.

Residues 1–13 are compositionally biased toward basic and acidic residues; it reads MKLHELQPAEGSR. A disordered region spans residues 1–58; it reads MKLHELQPAEGSRKVRNRVGRGIGSGNGKTAGKGHKGQKARSGGGVRPGFEGGQNPLY. 2 stretches are compositionally biased toward gly residues: residues 21–31 and 42–52; these read RGIGSGNGKTA and SGGGVRPGFEG.

It belongs to the universal ribosomal protein uL15 family. In terms of assembly, part of the 50S ribosomal subunit.

Functionally, binds to the 23S rRNA. The sequence is that of Large ribosomal subunit protein uL15 from Shouchella clausii (strain KSM-K16) (Alkalihalobacillus clausii).